The chain runs to 292 residues: E3 ubiquitin-protein ligase trim-21 (292 aa).

Residues 6-52 (CEICDDDFSSEEDGDHNPRNLKCSHTLCEGCIKKLLKNGRVVCPFCR) form an RING-type zinc finger. Residues 90–137 (NFPPKCVEHPYNVAEFACIESNCSSKNKLMCQTCEEFGAHKGHAKELL) form a B box-type zinc finger. Zn(2+) contacts are provided by C95, H98, C123, and H129. Positions 152–179 (INQLKLNIQNCTVKKNELEEAVVKSEQL) form a coiled coil.

It belongs to the TRIM/RBCC family. As to quaternary structure, interacts with E2 ubiquitin-conjugating enzyme ubc-21. Interacts with ced-6; this mediates interaction of trim-21 with ced-1 and is required for ced-1 ubiquitination. Interacts with nck-1; the interaction is required for ced-1 ubiquitination. In terms of tissue distribution, in early larva, observed mainly in pharyngeal and body wall muscle cells.

It is found in the cytoplasm. The enzyme catalyses S-ubiquitinyl-[E2 ubiquitin-conjugating enzyme]-L-cysteine + [acceptor protein]-L-lysine = [E2 ubiquitin-conjugating enzyme]-L-cysteine + N(6)-ubiquitinyl-[acceptor protein]-L-lysine.. The protein operates within protein modification; protein ubiquitination. E3 ubiquitin-protein ligase which catalyzes 'Lys-48'-linked polyubiquitination of ced-1, promoting its proteasomal degradation to maintain appropriate ced-1 levels for apoptotic cell clearance. Acts together with E2 ubiquitin-conjugating enzyme ubc-21. This Caenorhabditis elegans protein is E3 ubiquitin-protein ligase trim-21.